The primary structure comprises 538 residues: Bifunctional purine biosynthesis protein PurH (538 aa).

The region spanning 8-158 is the MGS-like domain; that stretch reads FPIPDLHRVR…KNHVYTGVIT (151 aa).

It belongs to the PurH family.

It catalyses the reaction (6R)-10-formyltetrahydrofolate + 5-amino-1-(5-phospho-beta-D-ribosyl)imidazole-4-carboxamide = 5-formamido-1-(5-phospho-D-ribosyl)imidazole-4-carboxamide + (6S)-5,6,7,8-tetrahydrofolate. The catalysed reaction is IMP + H2O = 5-formamido-1-(5-phospho-D-ribosyl)imidazole-4-carboxamide. The protein operates within purine metabolism; IMP biosynthesis via de novo pathway; 5-formamido-1-(5-phospho-D-ribosyl)imidazole-4-carboxamide from 5-amino-1-(5-phospho-D-ribosyl)imidazole-4-carboxamide (10-formyl THF route): step 1/1. It functions in the pathway purine metabolism; IMP biosynthesis via de novo pathway; IMP from 5-formamido-1-(5-phospho-D-ribosyl)imidazole-4-carboxamide: step 1/1. The protein is Bifunctional purine biosynthesis protein PurH of Bartonella henselae (strain ATCC 49882 / DSM 28221 / CCUG 30454 / Houston 1) (Rochalimaea henselae).